A 228-amino-acid chain; its full sequence is Protein JAZ7 (228 aa).

The region spanning 101–136 (LSPNESTLTIFYMGEVHIFPGISPEKAELIIDLVSK) is the Tify domain. Positions 176–199 (MARRATLARFLEKRKHRLIKARPY) match the Jas motif. Positions 177-184 (ARRATLAR) match the Nuclear localization signal motif.

The protein belongs to the TIFY/JAZ family. In terms of assembly, interacts with MYC2 (via N-terminus). JAZ7 competes with MED25 for binding to MYC2. Interacts with MTB1 (via N-terminus).

The protein localises to the nucleus. Its function is as follows. Repressor of jasmonate responses. This is Protein JAZ7 from Solanum lycopersicum (Tomato).